A 390-amino-acid polypeptide reads, in one-letter code: GDSL esterase/lipase At1g28640 (390 aa).

The first 26 residues, 1 to 26, serve as a signal peptide directing secretion; the sequence is MASSLEKLISSFLLVLYSTTIIVASS. Ser42 serves as the catalytic Nucleophile. N-linked (GlcNAc...) asparagine glycosylation is found at Asn105, Asn138, and Asn321. Active-site residues include Asp346 and His349. Asn364 is a glycosylation site (N-linked (GlcNAc...) asparagine).

The protein belongs to the 'GDSL' lipolytic enzyme family.

It localises to the secreted. The protein is GDSL esterase/lipase At1g28640 of Arabidopsis thaliana (Mouse-ear cress).